Reading from the N-terminus, the 313-residue chain is 2-phosphoglycerate kinase (313 aa).

The ATP-cone domain occupies 8 to 95 (SRILVTDKEY…LWRRVLKKHS (88 aa)).

It belongs to the 2-phosphoglycerate kinase family. The cofactor is a divalent metal cation.

It carries out the reaction (2R)-2-phosphoglycerate + ATP = (2R)-2,3-bisphosphoglycerate + ADP + H(+). Its pathway is thermoadapter biosynthesis; cyclic 2,3-diphosphoglycerate biosynthesis; cyclic 2,3-diphosphoglycerate from 2-phospho-D-glycerate: step 1/2. Catalyzes the phosphorylation of 2-phosphoglycerate to 2,3-diphosphoglycerate. Involved in the biosynthesis of cyclic 2,3-bisphosphoglycerate, a thermoprotectant. This Methanococcus maripaludis (strain C6 / ATCC BAA-1332) protein is 2-phosphoglycerate kinase.